Consider the following 1096-residue polypeptide: Protein EMBRYONIC FLOWER 1 (1096 aa).

Disordered regions lie at residues 155-189, 274-296, 315-348, 366-420, 563-612, 629-651, 1007-1032, and 1070-1096; these read KARGRPMGASNVRSKSRKLVSPEQVGNNRSKEKLN, KTSGGSNIRKEESALKKESVRGR, GATSENASKSCDSDQGNSESTDSGFDRTPFKGKQ, ETSQ…KKPV, LSRV…DIPM, DKEEDVSNKQPSQETAHKSKNAL, DKEKKQKRKAESCNNNASAGPVKNSS, and FKKKPAVCKQDAMKQTKKPVCPPTQNA. 2 consecutive short sequence motifs (nuclear localization signal) follow at residues 170 to 177 and 281 to 288; these read SRKLVSPE and IRKEESAL. The segment covering 281 to 294 has biased composition (basic and acidic residues); the sequence is IRKEESALKKESVR. Residues 315 to 337 show a composition bias toward polar residues; it reads GATSENASKSCDSDQGNSESTDS. The tract at residues 337–617 is DNA-binding; that stretch reads SGFDRTPFKG…DDIPMEIVEL (281 aa). The segment covering 371-381 has biased composition (basic and acidic residues); it reads GIKEHDADPSK. Residues 382–394 are compositionally biased toward polar residues; it reads RSTPAHSLFTGND. Positions 572 to 601 are enriched in basic and acidic residues; sequence SGADRKGKTVMVQEHHGAPRSQSHDRKETT. The segment at 866 to 1096 is DNA-binding; sequence LDPRLRSTTP…KPVCPPTQNA (231 aa). Residues 1018-1032 are compositionally biased toward polar residues; the sequence is SCNNNASAGPVKNSS. Residues 1071 to 1078 carry the Nuclear localization signal 3 motif; the sequence is KKKPAVCK.

As to quaternary structure, interacts with MSI1. As to expression, expressed in mature embryo, root tips, cotyledons, leaves, stems, shoot apex, and flower clusters, with highest levels in flowers. The presence in the shoot apical meristem (SAM) is required to maintain vegetative development and prevent early flowering.

Its subcellular location is the nucleus. In terms of biological role, transcription repressor that regulates phase transition during shoot, flower and seeds development. Controls leaves development, shoot architecture and flowering by delaying both the vegetative to reproductive transition and flower initiation. Participates in polycomb group (PcG) protein complex-mediated (including EMF2) silencing of the flower homeotic genes AGAMOUS (AG), PISTILLATA (PI), and APETALA3 (AP3), as well as of some regulatory genes such as ABSCISIC ACID INSENSITIVE3 (ABI3), LONG VEGETATIVE PHASE1 (LOV1), and FLOWERING LOCUS C (FLC) during vegetative development. Required for histone methylation or for maintaining a stable histone methylation (e.g. H3K27me3) pattern of repressed target genes (including genes involved in salt stress response and flower development); this repression is counteracted by ULT1. Can bind non specifically DNA (both double- and single-stranded) and RNA. The polypeptide is Protein EMBRYONIC FLOWER 1 (Arabidopsis thaliana (Mouse-ear cress)).